We begin with the raw amino-acid sequence, 154 residues long: Ribonuclease H (154 aa).

An RNase H type-1 domain is found at 7-148 (KPETVEIYTD…ADALAREGIA (142 aa)). 4 residues coordinate Mg(2+): Asp-16, Glu-54, Asp-76, and Asp-140.

The protein belongs to the RNase H family. In terms of assembly, monomer. It depends on Mg(2+) as a cofactor.

It localises to the cytoplasm. It catalyses the reaction Endonucleolytic cleavage to 5'-phosphomonoester.. Functionally, endonuclease that specifically degrades the RNA of RNA-DNA hybrids. This is Ribonuclease H from Paramagnetospirillum magneticum (strain ATCC 700264 / AMB-1) (Magnetospirillum magneticum).